We begin with the raw amino-acid sequence, 380 residues long: Set1 complex component swd3 (380 aa).

WD repeat units follow at residues Gly52–Thr91, Gly94–Cys133, Gly136–Pro177, His179–Val219, Pro221–Asp262, Asn291–Asp330, and Ser335–Glu374. Position 379 is a phosphoserine (Ser379).

Component of the Set1 complex composed of ash2, sdc1, set1, shg1, spp1, swd1, swd2 and swd3.

The protein localises to the nucleus. In terms of biological role, the Set1 complex specifically methylates 'Lys-4' of histone H3. In Schizosaccharomyces pombe (strain 972 / ATCC 24843) (Fission yeast), this protein is Set1 complex component swd3.